Consider the following 105-residue polypeptide: Phosphoribosyl-AMP cyclohydrolase (105 aa).

Asp-72 contacts Mg(2+). Cys-73 is a Zn(2+) binding site. The Mg(2+) site is built by Asp-74 and Asp-76. Zn(2+)-binding residues include Cys-89 and Cys-96.

Belongs to the PRA-CH family. In terms of assembly, homodimer. Mg(2+) serves as cofactor. It depends on Zn(2+) as a cofactor.

It localises to the cytoplasm. It carries out the reaction 1-(5-phospho-beta-D-ribosyl)-5'-AMP + H2O = 1-(5-phospho-beta-D-ribosyl)-5-[(5-phospho-beta-D-ribosylamino)methylideneamino]imidazole-4-carboxamide. Its pathway is amino-acid biosynthesis; L-histidine biosynthesis; L-histidine from 5-phospho-alpha-D-ribose 1-diphosphate: step 3/9. Catalyzes the hydrolysis of the adenine ring of phosphoribosyl-AMP. This Listeria monocytogenes serovar 1/2a (strain ATCC BAA-679 / EGD-e) protein is Phosphoribosyl-AMP cyclohydrolase.